The chain runs to 432 residues: Acyl-CoA dehydrogenase AFT10-1 (432 aa).

This sequence belongs to the acyl-CoA dehydrogenase family. FAD serves as cofactor.

Its pathway is mycotoxin biosynthesis. Functionally, acyl-CoA dehydrogenase; part of the gene clusters that mediate the biosynthesis of the host-selective toxins (HSTs) AF-toxins responsible for Alternaria black spot of strawberry disease by the strawberry pathotype. AF-toxin I and III are valine derivatives of 2,3-dyhydroxy-isovaleric acid and 2-hydroxy-isovaleric acid respectively, while AF II is an isoleucine derivative of 2-hydroxy-valeric acid. These derivatives are bound to a 9,10-epoxy-8-hydroxy-9-methyl-decatrienoic acid (EDA) moiety. On cellular level, AF-toxins affect plasma membrane of susceptible cells and cause a sudden increase in loss of K(+) after a few minutes of toxin treatment. The aldo-keto reductase AFTS1 catalyzes the conversion of 2-keto-isovaleric acid (2-KIV) to 2-hydroxy-isovaleric acid (2-HIV) by reduction of its ketone to an alcohol. The acyl-CoA ligase AFT1, the hydrolase AFT2 and the enoyl-CoA hydratases AFT3 and AFT6, but also the polyketide synthase AFT9, the acyl-CoA dehydrogenase AFT10, the cytochrome P450 monooxygenase AFT11 and the oxidoreductase AFT12 are all involved in the biosynthesis of the AK-, AF- and ACT-toxin common EDA structural moiety. The exact function of each enzyme, and of additional enzymes identified within the AF-toxin clusters have still to be determined. In Alternaria alternata (Alternaria rot fungus), this protein is Acyl-CoA dehydrogenase AFT10-1.